The sequence spans 503 residues: Protein ERGIC-53-like (503 aa).

Residues 1–25 form the signal peptide; that stretch reads MLKTGGLSPSLCLLSLLLALHSAER. Residues 26–439 lie on the Lumenal side of the membrane; that stretch reads SYPPPQRRFE…WLPGFSTCLR (414 aa). The L-type lectin-like domain occupies 32–253; sequence RRFEYKLSFK…DVLSFLTFSL (222 aa). Cysteines 177 and 216 form a disulfide. Residues 440–460 form a helical membrane-spanning segment; sequence TSIFLFFLLIQTVGFFCYMNF. The Cytoplasmic segment spans residues 461-503; it reads RQELDKRLQEYLFTESISLQPALPIPRTIGVLRRQPVSPSMQA.

In terms of tissue distribution, predominantly expressed in the sublingual salivary gland, in the mucous cells of the acini, but not in the serous cells, nor in the duct system (at protein level). Not detected in the submandilar, nor the parotid glands. Expressed in the mucous glands, but not detected in the serous glands (at protein level). Besides the salivary glands, expressed in the Brunner's glands in the duodenum, but no other mucous or serous glands (at protein level).

Its subcellular location is the endoplasmic reticulum-Golgi intermediate compartment membrane. This chain is Protein ERGIC-53-like (Lman1l), found in Rattus norvegicus (Rat).